The primary structure comprises 508 residues: uncharacterized protein (508 aa).

The chain crosses the membrane as a helical span at residues 7–29; sequence ALAIVLALILSLALPELLFQLYP.

The protein localises to the membrane. This is an uncharacterized protein from Archaeoglobus fulgidus (strain ATCC 49558 / DSM 4304 / JCM 9628 / NBRC 100126 / VC-16).